Here is a 354-residue protein sequence, read N- to C-terminus: Phenylalanine 4-monooxygenase, chloroplastic (354 aa).

The transit peptide at 1 to 60 directs the protein to the chloroplast; sequence MAFPLQKTFLCSNGQSFPCSNGRSTSTLLASDLKFQRLNKPFILRVGSMQIRNSPKEHPR. His-229, His-234, and Glu-274 together coordinate Fe cation.

It belongs to the biopterin-dependent aromatic amino acid hydroxylase family. As to quaternary structure, forms monomers. It depends on Fe(2+) as a cofactor.

The protein resides in the plastid. It is found in the chloroplast. It catalyses the reaction (6R)-L-erythro-5,6,7,8-tetrahydrobiopterin + L-phenylalanine + O2 = (4aS,6R)-4a-hydroxy-L-erythro-5,6,7,8-tetrahydrobiopterin + L-tyrosine. Functionally, catalyzes the hydroxylation of L-phenylalanine to L-tyrosine. Does not seem to be tetrahydropterin-dependent and shows preference for 10-formyltetrahydrofolate as cosubstrate and electron donor. The polypeptide is Phenylalanine 4-monooxygenase, chloroplastic (Pinus taeda (Loblolly pine)).